We begin with the raw amino-acid sequence, 258 residues long: MSERQLEKSIEHAVELAREARNIEVFTGAGMSADSGLETYRDDKTGLWSNVDPQAMASIDAWRKDPEPMWAWYRWRAGVAARAEPNAGHQAISYWEGSDTVEHVHITTQNIDNLHERAGSSDVTHLHGSLFEYRCSDCATPWEDDKNYPQEPIARLAPPQCEKCGGLIRPGVVWFGENLPVEEWDIAEQRIAEADLMIIVGTSGIVHPAAALPQLAQQRGVPIVEISPTRTELSRIADFTWMSTAAQALPALMRGLSA.

The Deacetylase sirtuin-type domain maps to 3-258 (ERQLEKSIEH…LPALMRGLSA (256 aa)). 28 to 48 (GAGMSADSGLETYRDDKTGLW) contacts NAD(+). Y73 and R76 together coordinate substrate. An NAD(+)-binding site is contributed by 109–112 (QNID). H127 functions as the Proton acceptor in the catalytic mechanism. Residues C135, C138, C161, and C164 each contribute to the Zn(2+) site. Residues 201–203 (GTS) and A245 each bind NAD(+).

This sequence belongs to the sirtuin family. Class III subfamily. It depends on Zn(2+) as a cofactor.

It is found in the cytoplasm. The catalysed reaction is N(6)-acetyl-L-lysyl-[protein] + NAD(+) + H2O = 2''-O-acetyl-ADP-D-ribose + nicotinamide + L-lysyl-[protein]. The enzyme catalyses N(6)-succinyl-L-lysyl-[protein] + NAD(+) + H2O = 2''-O-succinyl-ADP-D-ribose + nicotinamide + L-lysyl-[protein]. Its function is as follows. NAD-dependent lysine deacetylase and desuccinylase that specifically removes acetyl and succinyl groups on target proteins. Modulates the activities of several proteins which are inactive in their acylated form. The sequence is that of NAD-dependent protein deacylase from Corynebacterium glutamicum (strain ATCC 13032 / DSM 20300 / JCM 1318 / BCRC 11384 / CCUG 27702 / LMG 3730 / NBRC 12168 / NCIMB 10025 / NRRL B-2784 / 534).